Consider the following 319-residue polypeptide: ATP-dependent 6-phosphofructokinase (319 aa).

Gly11 contributes to the ATP binding site. 21–25 (RAVVR) is a binding site for ADP. Residues 72-73 (RC) and 102-105 (GDGS) each bind ATP. Asp103 contributes to the Mg(2+) binding site. 125 to 127 (TID) contributes to the substrate binding site. Asp127 serves as the catalytic Proton acceptor. Residue Arg154 participates in ADP binding. Substrate-binding positions include Arg162 and 169-171 (MGR). ADP-binding positions include 185–187 (GAE), Arg211, and 213–215 (KKH). Substrate-binding positions include Glu222, Arg243, and 249 to 252 (HMQR).

It belongs to the phosphofructokinase type A (PFKA) family. ATP-dependent PFK group I subfamily. Prokaryotic clade 'B1' sub-subfamily. In terms of assembly, homotetramer. Mg(2+) serves as cofactor.

It is found in the cytoplasm. The enzyme catalyses beta-D-fructose 6-phosphate + ATP = beta-D-fructose 1,6-bisphosphate + ADP + H(+). Its pathway is carbohydrate degradation; glycolysis; D-glyceraldehyde 3-phosphate and glycerone phosphate from D-glucose: step 3/4. With respect to regulation, allosterically activated by ADP and other diphosphonucleosides, and allosterically inhibited by phosphoenolpyruvate. Catalyzes the phosphorylation of D-fructose 6-phosphate to fructose 1,6-bisphosphate by ATP, the first committing step of glycolysis. The protein is ATP-dependent 6-phosphofructokinase of Macrococcus caseolyticus (strain JCSC5402) (Macrococcoides caseolyticum).